The primary structure comprises 196 residues: Protease (196 aa).

Catalysis depends on residues histidine 54, aspartate 70, and cysteine 121.

It belongs to the peptidase C5 family. As to quaternary structure, interacts with protease cofactor pVI-C; this interaction is necessary for protease activation.

It localises to the virion. The protein localises to the host nucleus. It catalyses the reaction Cleaves proteins of the adenovirus and its host cell at two consensus sites: -Yaa-Xaa-Gly-Gly-|-Xaa- and -Yaa-Xaa-Gly-Xaa-|-Gly- (in which Yaa is Met, Ile or Leu, and Xaa is any amino acid).. Its activity is regulated as follows. Requires DNA and protease cofactor for maximal activation. Inside nascent virions, becomes partially activated by binding to the viral DNA, allowing it to cleave the cofactor that binds to the protease and fully activates it. Actin, like the viral protease cofactor, seems to act as a cofactor in the cleavage of cytokeratin 18 and of actin itself. Its function is as follows. Cleaves viral precursor proteins (pTP, pIIIa, pVI, pVII, pVIII, and pX) inside newly assembled particles giving rise to mature virions. Protease complexed to its cofactor slides along the viral DNA to specifically locate and cleave the viral precursors. Mature virions have a weakened organization compared to the unmature virions, thereby facilitating subsequent uncoating. Without maturation, the particle lacks infectivity and is unable to uncoat. Late in adenovirus infection, in the cytoplasm, may participate in the cytoskeleton destruction. Cleaves host cell cytoskeletal keratins K7 and K18. The protein is Protease of Bos taurus (Bovine).